The chain runs to 98 residues: Cystatin-B (98 aa).

The 80-residue stretch at 4 to 83 (GGTSQPVDAD…PCNGETLELS (80 aa)) folds into the Cystatin domain. The Secondary area of contact motif lies at 46-50 (QCVPG).

It belongs to the cystatin family. Ubiquitously expressed in normal and lipopolysaccharide (LPS)-stimulated tissues including brain, eye, gullet, heart, liver, muscle, stomach, kidney, spleen, pyloric ceca, intestine and gill.

The protein resides in the cytoplasm. Its activity is regulated as follows. Greatly decreased inhibitory activity against papain protease by metal ions including ZnSO(4), CuSO(4), HgCl(2) and CoCl(2). Decreased inhibitory activity against papain protease by detergents including Tween 20, SDS and Brij 35. Thiol protease inhibitor. Has high papain, bovine cathepsin B and fish cathepsins F and X inhibitory activity and inhibits fish cathepsins L, S and K to a lesser extent in vitro. May be involved in innate immunity. The chain is Cystatin-B from Paralichthys olivaceus (Bastard halibut).